The sequence spans 147 residues: UPF0306 protein YhbP (147 aa).

Belongs to the UPF0306 family.

The sequence is that of UPF0306 protein YhbP from Shigella dysenteriae serotype 1 (strain Sd197).